The chain runs to 298 residues: Inosose dehydratase (298 aa).

The protein belongs to the IolE/MocC family. Requires glutathione as cofactor. Co(2+) serves as cofactor. Mn(2+) is required as a cofactor.

It catalyses the reaction scyllo-inosose = 3D-3,5/4-trihydroxycyclohexane-1,2-dione + H2O. The protein operates within polyol metabolism; myo-inositol degradation into acetyl-CoA; acetyl-CoA from myo-inositol: step 2/7. Its function is as follows. Catalyzes the dehydration of inosose (2-keto-myo-inositol, 2KMI or 2,4,6/3,5-pentahydroxycyclohexanone) to 3D-(3,5/4)-trihydroxycyclohexane-1,2-dione (D-2,3-diketo-4-deoxy-epi-inositol). In Bacillus thuringiensis (strain Al Hakam), this protein is Inosose dehydratase.